The chain runs to 77 residues: MSDCHPVLLPEGPFSREQAVAVTTAYRNVLIEDDQGTHFRLVIRNAEGQLRWRCWNFEPDAGKQLNSYLASEGILRQ.

It belongs to the UPF0401 family.

This Escherichia coli O6:K15:H31 (strain 536 / UPEC) protein is UPF0401 protein ECP_3853.